The sequence spans 347 residues: Haptoglobin (347 aa).

A signal peptide spans 1 to 18; that stretch reads MRALGAVVTLLLWGQLFA. In terms of domain architecture, Sushi spans 31–88; it reads DSCPKPPEIANGYVEHLVRYRCRQFYRLRTEGDGVYTLNDEKQWVNTAAGEKLPECEA. Cystine bridges form between Cys-52/Cys-86, Cys-90/Cys-207, Cys-250/Cys-281, and Cys-292/Cys-322. The 243-residue stretch at 103–345 folds into the Peptidase S1 domain; sequence IIGGSMDAKG…LKDWVQETMA (243 aa). N-linked (GlcNAc...) asparagine glycans are attached at residues Asn-148, Asn-182, Asn-256, and Asn-264. Residues 259–264 are interaction with CD163; sequence VPEKKN.

Belongs to the peptidase S1 family. As to quaternary structure, tetramer of two alpha and two beta chains; disulfide-linked. The hemoglobin/haptoglobin complex is composed of a haptoglobin dimer bound to two hemoglobin alpha-beta dimers. Interacts with CD163. Interacts with ERGIC3. Expressed by the liver and secreted in plasma.

The protein localises to the secreted. In terms of biological role, as a result of hemolysis, hemoglobin is found to accumulate in the kidney and is secreted in the urine. Haptoglobin captures, and combines with free plasma hemoglobin to allow hepatic recycling of heme iron and to prevent kidney damage. Haptoglobin also acts as an antioxidant, has antibacterial activity and plays a role in modulating many aspects of the acute phase response. Hemoglobin/haptoglobin complexes are rapidly cleared by the macrophage CD163 scavenger receptor expressed on the surface of liver Kupfer cells through an endocytic lysosomal degradation pathway. In Mus saxicola (Brown spiny mouse), this protein is Haptoglobin (Hp).